The following is a 160-amino-acid chain: Nucleotide-binding protein VF_1240 (160 aa).

This sequence belongs to the YajQ family.

Functionally, nucleotide-binding protein. This Aliivibrio fischeri (strain ATCC 700601 / ES114) (Vibrio fischeri) protein is Nucleotide-binding protein VF_1240.